The following is a 296-amino-acid chain: NAD kinase (296 aa).

The active-site Proton acceptor is D72. Residues 72 to 73 (DG), 146 to 147 (ND), R157, K174, D176, 187 to 192 (TAYALS), and Q247 each bind NAD(+).

This sequence belongs to the NAD kinase family. A divalent metal cation is required as a cofactor.

It is found in the cytoplasm. It catalyses the reaction NAD(+) + ATP = ADP + NADP(+) + H(+). Its function is as follows. Involved in the regulation of the intracellular balance of NAD and NADP, and is a key enzyme in the biosynthesis of NADP. Catalyzes specifically the phosphorylation on 2'-hydroxyl of the adenosine moiety of NAD to yield NADP. This is NAD kinase from Pseudomonas savastanoi pv. phaseolicola (strain 1448A / Race 6) (Pseudomonas syringae pv. phaseolicola (strain 1448A / Race 6)).